Reading from the N-terminus, the 1214-residue chain is Receptor-type guanylate cyclase gcy-19 (1214 aa).

The first 18 residues, 1–18 (MEHLIFLLIFGGYSPSIA), serve as a signal peptide directing secretion. Residues 19-517 (QITSSTTTTT…PQTFVDQYGA (499 aa)) are Extracellular-facing. 4 N-linked (GlcNAc...) asparagine glycosylation sites follow: asparagine 85, asparagine 363, asparagine 441, and asparagine 464. A helical membrane pass occupies residues 518–538 (LVFSIGGVLALAMLFLITCFF). Residues 539–1214 (YVLRQRKLER…FRRQETLALM (676 aa)) lie on the Cytoplasmic side of the membrane. The Protein kinase domain occupies 572 to 859 (RMSKRSIQSG…KGNLMDHVFN (288 aa)). The Guanylate cyclase domain maps to 917 to 1047 (TVFFSDVVKF…DTVNTASRME (131 aa)). The segment at 1116-1197 (NSSNMAYNPE…EKAREIHNEE (82 aa)) is disordered. Acidic residues predominate over residues 1133 to 1142 (DDEDVDDESS). Residues 1186–1197 (LEEKAREIHNEE) are compositionally biased toward basic and acidic residues.

This sequence belongs to the adenylyl cyclase class-4/guanylyl cyclase family. In terms of tissue distribution, expressed asymmetrically in ASE right (ASER) sensory neuron.

It is found in the cell membrane. The enzyme catalyses GTP = 3',5'-cyclic GMP + diphosphate. Guanylate cyclase involved in the production of the second messenger cGMP. The protein is Receptor-type guanylate cyclase gcy-19 of Caenorhabditis briggsae.